A 96-amino-acid chain; its full sequence is Co-chaperonin GroES (96 aa).

The protein belongs to the GroES chaperonin family. As to quaternary structure, heptamer of 7 subunits arranged in a ring. Interacts with the chaperonin GroEL.

The protein localises to the cytoplasm. Its function is as follows. Together with the chaperonin GroEL, plays an essential role in assisting protein folding. The GroEL-GroES system forms a nano-cage that allows encapsulation of the non-native substrate proteins and provides a physical environment optimized to promote and accelerate protein folding. GroES binds to the apical surface of the GroEL ring, thereby capping the opening of the GroEL channel. This Neisseria gonorrhoeae (strain ATCC 700825 / FA 1090) protein is Co-chaperonin GroES.